The following is a 681-amino-acid chain: Mating-type protein beta1-1 (681 aa).

A DNA-binding region (homeobox; TALE-type) is located at residues 165-227 (DKNEPTSPTP…DARRRIGWNE (63 aa)). The segment covering 307–318 (LKNDEARRKREA) has biased composition (basic and acidic residues). 3 disordered regions span residues 307-341 (LKND…SPAS), 353-381 (AIDS…SPLC), and 394-466 (SPVK…SDPF). Over residues 413 to 430 (TSAAPSPQPSLLPKLTPT) the composition is skewed to low complexity.

Belongs to the TALE/M-ATYP homeobox family. In terms of assembly, may dimerize.

Its subcellular location is the nucleus. In terms of biological role, has a major regulatory role in sexual and asexual development. It may bind DNA itself or it may have a role in preventing DNA-binding of another protein. This chain is Mating-type protein beta1-1, found in Coprinopsis cinerea (Inky cap fungus).